Consider the following 196-residue polypeptide: Holliday junction branch migration complex subunit RuvA (196 aa).

Residues 1-63 (MYEYFKGIIS…EDAELLYGFA (63 aa)) form a domain I region. The domain II stretch occupies residues 64 to 142 (TEEEKQLFLS…AADGLAESKA (79 aa)). The segment at 143–146 (PVQT) is flexible linker. The segment at 147 to 196 (VDNQELEEAMEAMLALGYKATELKKIKKFFEGTTDTAENYIKSALKMLVK) is domain III.

This sequence belongs to the RuvA family. In terms of assembly, homotetramer. Forms an RuvA(8)-RuvB(12)-Holliday junction (HJ) complex. HJ DNA is sandwiched between 2 RuvA tetramers; dsDNA enters through RuvA and exits via RuvB. An RuvB hexamer assembles on each DNA strand where it exits the tetramer. Each RuvB hexamer is contacted by two RuvA subunits (via domain III) on 2 adjacent RuvB subunits; this complex drives branch migration. In the full resolvosome a probable DNA-RuvA(4)-RuvB(12)-RuvC(2) complex forms which resolves the HJ.

Its subcellular location is the cytoplasm. Its function is as follows. The RuvA-RuvB-RuvC complex processes Holliday junction (HJ) DNA during genetic recombination and DNA repair, while the RuvA-RuvB complex plays an important role in the rescue of blocked DNA replication forks via replication fork reversal (RFR). RuvA specifically binds to HJ cruciform DNA, conferring on it an open structure. The RuvB hexamer acts as an ATP-dependent pump, pulling dsDNA into and through the RuvAB complex. HJ branch migration allows RuvC to scan DNA until it finds its consensus sequence, where it cleaves and resolves the cruciform DNA. This Streptococcus gordonii (strain Challis / ATCC 35105 / BCRC 15272 / CH1 / DL1 / V288) protein is Holliday junction branch migration complex subunit RuvA.